The chain runs to 637 residues: Chaperone protein HtpG (637 aa).

Positions 1–338 are a; substrate-binding; it reads MMELKMHNVK…SPDLPLNISR (338 aa). A b region spans residues 339–558; sequence ETLQNNRVVE…EGAMDLRMER (220 aa). The tract at residues 493–512 is disordered; sequence KFSPEEKDKENKSDEERAEG. The c stretch occupies residues 559–637; it reads FLREQNQLNY…LNNLLGKVII (79 aa).

The protein belongs to the heat shock protein 90 family. In terms of assembly, homodimer.

It is found in the cytoplasm. Functionally, molecular chaperone. Has ATPase activity. The chain is Chaperone protein HtpG from Wolbachia sp. subsp. Brugia malayi (strain TRS).